Reading from the N-terminus, the 826-residue chain is Zinc phosphodiesterase ELAC protein 2 (826 aa).

The transit peptide at 1–16 (MWALCSLLRSATGRTM) directs the protein to the mitochondrion. Residues 15–27 (TMSQGRTISQGSA) are compositionally biased toward polar residues. 2 disordered regions span residues 15-53 (TMSQ…GSSG) and 187-231 (SEQR…VSQR). 6 positions are modified to phosphoserine: S199, S208, S212, S229, S618, and S736. Basic and acidic residues predominate over residues 208–224 (SPERSSDSESNESEPHL). The disordered stretch occupies residues 798–826 (ALTDDLEDGEPQQKRAHTEEPQSKKVRAQ). Residues 808–820 (PQQKRAHTEEPQS) are compositionally biased toward basic and acidic residues.

Belongs to the RNase Z family. As to quaternary structure, homodimer. Interacts with PTCD1. Requires Zn(2+) as cofactor.

The protein resides in the mitochondrion. It localises to the mitochondrion matrix. It is found in the mitochondrion nucleoid. Its subcellular location is the nucleus. It carries out the reaction Endonucleolytic cleavage of RNA, removing extra 3' nucleotides from tRNA precursor, generating 3' termini of tRNAs. A 3'-hydroxy group is left at the tRNA terminus and a 5'-phosphoryl group is left at the trailer molecule.. Zinc phosphodiesterase, which displays mitochondrial tRNA 3'-processing endonuclease activity. Involved in tRNA maturation, by removing a 3'-trailer from precursor tRNA. Associates with mitochondrial DNA complexes at the nucleoids to initiate RNA processing and ribosome assembly. The protein is Zinc phosphodiesterase ELAC protein 2 (ELAC2) of Macaca fascicularis (Crab-eating macaque).